Reading from the N-terminus, the 483-residue chain is Protein FIZZY-RELATED 2 (483 aa).

Residues 1 to 28 are disordered; the sequence is MEEEDPTASNVITNSNSSSMRNLSPAMN. The segment covering 7–28 has biased composition (polar residues); it reads TASNVITNSNSSSMRNLSPAMN. WD repeat units lie at residues 174 to 211, 215 to 254, 257 to 294, 298 to 337, 340 to 382, 384 to 425, and 428 to 467; these read QDDFYLNLVDWSAQNVLAVGLGNCVYLWNACSSKVTKL, GAEDSVCSVGWALRGTHLAVGTSTGKVQIWDASRCKRTRT, GHRLRVGALAWGSSVLSSGSRDKSILQRDIRCQEDHVS, GHKSEVCGLKWSYDNRELASGGNDNRLFVWNQHSTQPVLK, EHTA…HLSS, DTCS…KIAT, and GHTYRVLYLAVSPDGQTIVTGAGDETLRFWNVFPSPKSQN.

This sequence belongs to the WD repeat CDC20/Fizzy family. As to quaternary structure, associates with the APC/C complex. Interacts with CDC20-1, CDC20-2, CYCA1-1, CYCA1-2, CYCA3-4, CYCB1-1 and CYCB1-2. Binds to GIG1 and PYM. Expressed in seedlings, flowers, leaves and roots. Expressed in the differentiating cell files of the root elongation zone.

It localises to the nucleus. Its pathway is protein modification; protein ubiquitination. Its function is as follows. Activator protein that regulates the ubiquitin ligase activity and substrate specificity of the anaphase promoting complex/cyclosome (APC/C). Necessary and sufficient for endoreduplication and correct cell expansion. Controls meristem size by stimulating endoreduplication in the elongation zone. This is Protein FIZZY-RELATED 2 (FZR2) from Arabidopsis thaliana (Mouse-ear cress).